We begin with the raw amino-acid sequence, 433 residues long: Serine--tRNA ligase (433 aa).

Position 235–237 (235–237 (TSE)) interacts with L-serine. 266–268 (RSE) is a binding site for ATP. An L-serine-binding site is contributed by E289. 353–356 (EISS) lines the ATP pocket. S388 lines the L-serine pocket.

Belongs to the class-II aminoacyl-tRNA synthetase family. Type-1 seryl-tRNA synthetase subfamily. In terms of assembly, homodimer. The tRNA molecule binds across the dimer.

Its subcellular location is the cytoplasm. It catalyses the reaction tRNA(Ser) + L-serine + ATP = L-seryl-tRNA(Ser) + AMP + diphosphate + H(+). The catalysed reaction is tRNA(Sec) + L-serine + ATP = L-seryl-tRNA(Sec) + AMP + diphosphate + H(+). Its pathway is aminoacyl-tRNA biosynthesis; selenocysteinyl-tRNA(Sec) biosynthesis; L-seryl-tRNA(Sec) from L-serine and tRNA(Sec): step 1/1. Catalyzes the attachment of serine to tRNA(Ser). Is also able to aminoacylate tRNA(Sec) with serine, to form the misacylated tRNA L-seryl-tRNA(Sec), which will be further converted into selenocysteinyl-tRNA(Sec). The chain is Serine--tRNA ligase from Burkholderia cenocepacia (strain HI2424).